Reading from the N-terminus, the 253-residue chain is tRNA pseudouridine synthase A (253 aa).

Aspartate 51 functions as the Nucleophile in the catalytic mechanism. Position 110 (tyrosine 110) interacts with substrate.

The protein belongs to the tRNA pseudouridine synthase TruA family. In terms of assembly, homodimer.

The catalysed reaction is uridine(38/39/40) in tRNA = pseudouridine(38/39/40) in tRNA. Formation of pseudouridine at positions 38, 39 and 40 in the anticodon stem and loop of transfer RNAs. This Wolinella succinogenes (strain ATCC 29543 / DSM 1740 / CCUG 13145 / JCM 31913 / LMG 7466 / NCTC 11488 / FDC 602W) (Vibrio succinogenes) protein is tRNA pseudouridine synthase A.